A 416-amino-acid chain; its full sequence is Glutamyl-tRNA reductase (416 aa).

Substrate-binding positions include 49–52, Ser105, 110–112, and Gln116; these read TCNR and EPQ. Catalysis depends on Cys50, which acts as the Nucleophile. 185–190 is a binding site for NADP(+); that stretch reads GAGETI.

Belongs to the glutamyl-tRNA reductase family. Homodimer.

It catalyses the reaction (S)-4-amino-5-oxopentanoate + tRNA(Glu) + NADP(+) = L-glutamyl-tRNA(Glu) + NADPH + H(+). It functions in the pathway porphyrin-containing compound metabolism; protoporphyrin-IX biosynthesis; 5-aminolevulinate from L-glutamyl-tRNA(Glu): step 1/2. Its function is as follows. Catalyzes the NADPH-dependent reduction of glutamyl-tRNA(Glu) to glutamate 1-semialdehyde (GSA). This is Glutamyl-tRNA reductase from Shewanella pealeana (strain ATCC 700345 / ANG-SQ1).